Here is a 225-residue protein sequence, read N- to C-terminus: Agamous-like MADS-box protein TM6 (225 aa).

One can recognise an MADS-box domain in the interval 1-61 (MGRGKIEIKR…GKFHEYTSPT (61 aa)). Residues 84 to 174 (YERMQENLRK…LLNFEAKCDD (91 aa)) enclose the K-box domain.

Expressed during flower development in stamens, petals and carpels. Expressed in fruits and seeds.

The protein localises to the nucleus. Probable transcription factor involved in flower development. This chain is Agamous-like MADS-box protein TM6, found in Vitis vinifera (Grape).